Consider the following 950-residue polypeptide: Valine--tRNA ligase, mitochondrial (950 aa).

The transit peptide at 1-90 (MFHFQRSFSS…ITIQDALARF (90 aa)) directs the protein to the mitochondrion. Residues 67-77 (PNITGKLHIGH) carry the 'HIGH' region motif. A 'KMSKS' region motif is present at residues 556-560 (KMSKS). Position 559 (lysine 559) interacts with ATP.

This sequence belongs to the class-I aminoacyl-tRNA synthetase family.

The protein resides in the mitochondrion. The catalysed reaction is tRNA(Val) + L-valine + ATP = L-valyl-tRNA(Val) + AMP + diphosphate. The sequence is that of Valine--tRNA ligase, mitochondrial (vas1) from Schizosaccharomyces pombe (strain 972 / ATCC 24843) (Fission yeast).